Reading from the N-terminus, the 111-residue chain is uncharacterized protein (111 aa).

A run of 2 helical transmembrane segments spans residues 7 to 29 and 49 to 71; these read LYSS…RALY and PSLL…SINL.

The protein localises to the membrane. This is an uncharacterized protein from Saccharomyces cerevisiae (strain ATCC 204508 / S288c) (Baker's yeast).